The chain runs to 204 residues: Somatotropin (204 aa).

Positions 1–17 (MDRVVLMLSVMSLGVSS) are cleaved as a signal peptide. At Q18 the chain carries Pyrrolidone carboxylic acid. Zn(2+) is bound at residue H36. A disulfide bridge connects residues C69 and C177. A Zn(2+)-binding site is contributed by E186. The cysteines at positions 194 and 202 are disulfide-linked.

It belongs to the somatotropin/prolactin family.

The protein resides in the secreted. Its function is as follows. Growth hormone plays an important role in growth control and is involved in the regulation of several anabolic processes. Implicated as an osmoregulatory substance important for seawater adaptation. This Sparus aurata (Gilthead sea bream) protein is Somatotropin (gh).